Here is a 234-residue protein sequence, read N- to C-terminus: Orotidine 5'-phosphate decarboxylase (234 aa).

Residues D10, K32, 59-68, T119, R180, Q189, G209, and R210 each bind substrate; that span reads DLKFHDIPNT. The active-site Proton donor is the K61.

It belongs to the OMP decarboxylase family. Type 1 subfamily. Homodimer.

The catalysed reaction is orotidine 5'-phosphate + H(+) = UMP + CO2. It functions in the pathway pyrimidine metabolism; UMP biosynthesis via de novo pathway; UMP from orotate: step 2/2. Catalyzes the decarboxylation of orotidine 5'-monophosphate (OMP) to uridine 5'-monophosphate (UMP). This Mannheimia succiniciproducens (strain KCTC 0769BP / MBEL55E) protein is Orotidine 5'-phosphate decarboxylase.